The following is a 132-amino-acid chain: Large ribosomal subunit protein bL17 (132 aa).

This sequence belongs to the bacterial ribosomal protein bL17 family. Part of the 50S ribosomal subunit. Contacts protein L32.

The polypeptide is Large ribosomal subunit protein bL17 (Marinobacter nauticus (strain ATCC 700491 / DSM 11845 / VT8) (Marinobacter aquaeolei)).